The chain runs to 183 residues: Holliday junction branch migration complex subunit RuvA (183 aa).

Residues 1-64 are domain I; the sequence is MIVAIEGIVS…EDSHKLYGFL (64 aa). Residues 65–138 form a domain II region; it reads DTNEQRMFEL…SDAKINIENS (74 aa). A region of interest (flexible linker) is located at residue S138. The domain III stretch occupies residues 138-183; sequence SNQDHAQALAALLSLGFKQENILKVLRTCESQNTSELIKEALKKLA.

The protein belongs to the RuvA family. Homotetramer. Forms an RuvA(8)-RuvB(12)-Holliday junction (HJ) complex. HJ DNA is sandwiched between 2 RuvA tetramers; dsDNA enters through RuvA and exits via RuvB. An RuvB hexamer assembles on each DNA strand where it exits the tetramer. Each RuvB hexamer is contacted by two RuvA subunits (via domain III) on 2 adjacent RuvB subunits; this complex drives branch migration. In the full resolvosome a probable DNA-RuvA(4)-RuvB(12)-RuvC(2) complex forms which resolves the HJ.

The protein localises to the cytoplasm. Its function is as follows. The RuvA-RuvB-RuvC complex processes Holliday junction (HJ) DNA during genetic recombination and DNA repair, while the RuvA-RuvB complex plays an important role in the rescue of blocked DNA replication forks via replication fork reversal (RFR). RuvA specifically binds to HJ cruciform DNA, conferring on it an open structure. The RuvB hexamer acts as an ATP-dependent pump, pulling dsDNA into and through the RuvAB complex. HJ branch migration allows RuvC to scan DNA until it finds its consensus sequence, where it cleaves and resolves the cruciform DNA. This is Holliday junction branch migration complex subunit RuvA from Campylobacter lari (strain RM2100 / D67 / ATCC BAA-1060).